The chain runs to 872 residues: F-box protein pof6 (872 aa).

Residues 30 to 75 (FGCLTINIYLKIFTLISTPDLCNCRLVCRKFQQLCDYNSIYVKKLL) form the F-box domain. The segment at 101-122 (MSSNTSKGFHLQSSDKKYADSD) is disordered. Basic and acidic residues predominate over residues 113-122 (SSDKKYADSD).

In terms of assembly, interacts with skp1. Forms a complex with pof6 and skp1.

The protein resides in the cytoplasm. It is found in the nucleus. In terms of biological role, together with skp1, essential for septum processing and cell separation. The chain is F-box protein pof6 (pof6) from Schizosaccharomyces pombe (strain 972 / ATCC 24843) (Fission yeast).